A 199-amino-acid polypeptide reads, in one-letter code: Peptidyl-tRNA hydrolase (199 aa).

Tyr-15 contacts tRNA. His-20 functions as the Proton acceptor in the catalytic mechanism. Residues Tyr-66, Asn-68, and Asn-114 each coordinate tRNA.

It belongs to the PTH family. As to quaternary structure, monomer.

It localises to the cytoplasm. It catalyses the reaction an N-acyl-L-alpha-aminoacyl-tRNA + H2O = an N-acyl-L-amino acid + a tRNA + H(+). Functionally, hydrolyzes ribosome-free peptidyl-tRNAs (with 1 or more amino acids incorporated), which drop off the ribosome during protein synthesis, or as a result of ribosome stalling. Its function is as follows. Catalyzes the release of premature peptidyl moieties from peptidyl-tRNA molecules trapped in stalled 50S ribosomal subunits, and thus maintains levels of free tRNAs and 50S ribosomes. This Burkholderia multivorans (strain ATCC 17616 / 249) protein is Peptidyl-tRNA hydrolase.